The following is a 351-amino-acid chain: GTPase Obg (351 aa).

An Obg domain is found at 1–159 (MKFLDQAKVY…RWIWLRLKLI (159 aa)). One can recognise an OBG-type G domain in the interval 160 to 328 (ADVGLVGLPN…LCGSAWDIVL (169 aa)). GTP contacts are provided by residues 166 to 173 (GLPNAGKS), 191 to 195 (FTTLY), 213 to 216 (DIPG), 280 to 283 (NKID), and 309 to 311 (SGV). Mg(2+) is bound by residues S173 and T193.

Belongs to the TRAFAC class OBG-HflX-like GTPase superfamily. OBG GTPase family. In terms of assembly, monomer. Requires Mg(2+) as cofactor.

The protein resides in the cytoplasm. An essential GTPase which binds GTP, GDP and possibly (p)ppGpp with moderate affinity, with high nucleotide exchange rates and a fairly low GTP hydrolysis rate. Plays a role in control of the cell cycle, stress response, ribosome biogenesis and in those bacteria that undergo differentiation, in morphogenesis control. The chain is GTPase Obg from Maricaulis maris (strain MCS10) (Caulobacter maris).